Reading from the N-terminus, the 156-residue chain is Rhombotin-1 (156 aa).

LIM zinc-binding domains follow at residues 22–84 (KGCA…LFGT) and 86–148 (GNCA…GQLN).

It localises to the nucleus. In terms of biological role, may be involved in gene regulation within neural lineage cells potentially by direct DNA binding or by binding to other transcription factors. This is Rhombotin-1 from Xenopus laevis (African clawed frog).